We begin with the raw amino-acid sequence, 311 residues long: Aquaporin NIP3-1 (311 aa).

Residues methionine 1 to phenylalanine 34 are disordered. The span at glycine 20–phenylalanine 34 shows a compositional bias: low complexity. 2 helical membrane-spanning segments follow: residues leucine 85 to valine 105 and glycine 111 to leucine 131. The NPA 1 signature appears at asparagine 142–serine 144. The next 3 helical transmembrane spans lie at leucine 158–leucine 178, alanine 202–threonine 222, and alanine 226–alanine 246. The NPA 2 motif lies at asparagine 255–valine 257. A helical transmembrane segment spans residues tryptophan 273–valine 293.

Belongs to the MIP/aquaporin (TC 1.A.8) family. NIP (TC 1.A.8.12) subfamily. Expressed in roots and leaves.

It is found in the membrane. Its function is as follows. Aquaporins facilitate the transport of water and small neutral solutes across cell membranes. The polypeptide is Aquaporin NIP3-1 (NIP3-1) (Oryza sativa subsp. japonica (Rice)).